Consider the following 175-residue polypeptide: Secretion monitor (175 aa).

Residues 1-38 (MSIINFWRQFGRRYFWSHLLLGMVAAGIGMPSLVSAHA) form the signal peptide.

This sequence belongs to the SecM family.

The protein resides in the cytoplasm. It localises to the cytosol. It is found in the periplasm. Its function is as follows. Regulates secA expression by translational coupling of the secM secA operon. Translational pausing at a specific Pro residue 5 residues before the end of the protein may allow disruption of a mRNA repressor helix that normally suppresses secA translation initiation. The sequence is that of Secretion monitor from Proteus mirabilis (strain HI4320).